Here is a 523-residue protein sequence, read N- to C-terminus: 2-isopropylmalate synthase (523 aa).

A Pyruvate carboxyltransferase domain is found at 5–267 (VIIFDTTLRD…HTRINHQEIW (263 aa)). The Mn(2+) site is built by D14, H202, H204, and N238. A regulatory domain region spans residues 392–523 (RLDYFSVQSG…QNKENNKETV (132 aa)).

The protein belongs to the alpha-IPM synthase/homocitrate synthase family. LeuA type 1 subfamily. Homodimer. Requires Mn(2+) as cofactor.

It is found in the cytoplasm. It carries out the reaction 3-methyl-2-oxobutanoate + acetyl-CoA + H2O = (2S)-2-isopropylmalate + CoA + H(+). The protein operates within amino-acid biosynthesis; L-leucine biosynthesis; L-leucine from 3-methyl-2-oxobutanoate: step 1/4. Its function is as follows. Catalyzes the condensation of the acetyl group of acetyl-CoA with 3-methyl-2-oxobutanoate (2-ketoisovalerate) to form 3-carboxy-3-hydroxy-4-methylpentanoate (2-isopropylmalate). This is 2-isopropylmalate synthase from Citrobacter koseri (strain ATCC BAA-895 / CDC 4225-83 / SGSC4696).